The sequence spans 461 residues: Bifunctional protein GlmU (461 aa).

The interval 1-232 (MNLQIIILAA…SFEVQGINNR (232 aa)) is pyrophosphorylase. Residues 8 to 11 (LAAG), K22, Q73, and 78 to 79 (GT) contribute to the UDP-N-acetyl-alpha-D-glucosamine site. Residue D102 coordinates Mg(2+). G142, E157, and N230 together coordinate UDP-N-acetyl-alpha-D-glucosamine. N230 lines the Mg(2+) pocket. Residues 233-253 (QQLQQLERIWQQRAANQLMEK) form a linker region. An N-acetyltransferase region spans residues 254–461 (GATLADANRF…WKRPVKRERD (208 aa)). UDP-N-acetyl-alpha-D-glucosamine-binding residues include R336 and K354. Catalysis depends on H366, which acts as the Proton acceptor. Positions 369 and 380 each coordinate UDP-N-acetyl-alpha-D-glucosamine. Acetyl-CoA-binding positions include A383, 389-390 (NY), S408, and A426.

It in the N-terminal section; belongs to the N-acetylglucosamine-1-phosphate uridyltransferase family. This sequence in the C-terminal section; belongs to the transferase hexapeptide repeat family. As to quaternary structure, homotrimer. It depends on Mg(2+) as a cofactor.

The protein resides in the cytoplasm. The enzyme catalyses alpha-D-glucosamine 1-phosphate + acetyl-CoA = N-acetyl-alpha-D-glucosamine 1-phosphate + CoA + H(+). It catalyses the reaction N-acetyl-alpha-D-glucosamine 1-phosphate + UTP + H(+) = UDP-N-acetyl-alpha-D-glucosamine + diphosphate. It functions in the pathway nucleotide-sugar biosynthesis; UDP-N-acetyl-alpha-D-glucosamine biosynthesis; N-acetyl-alpha-D-glucosamine 1-phosphate from alpha-D-glucosamine 6-phosphate (route II): step 2/2. Its pathway is nucleotide-sugar biosynthesis; UDP-N-acetyl-alpha-D-glucosamine biosynthesis; UDP-N-acetyl-alpha-D-glucosamine from N-acetyl-alpha-D-glucosamine 1-phosphate: step 1/1. The protein operates within bacterial outer membrane biogenesis; LPS lipid A biosynthesis. Functionally, catalyzes the last two sequential reactions in the de novo biosynthetic pathway for UDP-N-acetylglucosamine (UDP-GlcNAc). The C-terminal domain catalyzes the transfer of acetyl group from acetyl coenzyme A to glucosamine-1-phosphate (GlcN-1-P) to produce N-acetylglucosamine-1-phosphate (GlcNAc-1-P), which is converted into UDP-GlcNAc by the transfer of uridine 5-monophosphate (from uridine 5-triphosphate), a reaction catalyzed by the N-terminal domain. This chain is Bifunctional protein GlmU, found in Legionella pneumophila (strain Corby).